Consider the following 232-residue polypeptide: Large ribosomal subunit protein uL1 (232 aa).

Belongs to the universal ribosomal protein uL1 family. In terms of assembly, part of the 50S ribosomal subunit.

Functionally, binds directly to 23S rRNA. The L1 stalk is quite mobile in the ribosome, and is involved in E site tRNA release. Protein L1 is also a translational repressor protein, it controls the translation of the L11 operon by binding to its mRNA. The chain is Large ribosomal subunit protein uL1 from Bartonella bacilliformis (strain ATCC 35685 / KC583 / Herrer 020/F12,63).